The following is a 2215-amino-acid chain: MATRSSRRESRLPFLFALVALLPRGALGGGWTQRLHGGPAPLPQDRGFFVVQGDPRDLRLGTHGDAPGASPAARKPLRTRRSAALQPQPIQVYGQVSLNDSHNQMVVHWAGEKSNVIVALARDSLALARPKSSDVYVSYDYGKSFSKISEKLNFGVGNNSEAVISQFYHSPADNKRYIFVDAYAQYLWITFDFCSTIHGFSIPFRAADLLLHSKASNLLLGFDRSHPNKQLWKSDDFGQTWIMIQEHVKSFSWGIDPYDQPNAIYIERHEPFGFSTVLRSTDFFQSRENQEVILEEVRDFQLRDKYMFATKVVHLPGSQQQSSVQLWVSFGRKPMRAAQFVTKHPINEYYIADAAEDQVFVCVSHSNNSTNLYISEAEGLKFSLSLENVLYYSPGGAGSDTLVRYFANEPFADFHRVEGLQGVYIATLINGSMNEENMRSVITFDKGGTWEFLQAPAFTGYGEKINCELSQGCSLHLAQRLSQLLNLQLRRMPILSKESAPGLIIATGSVGKNLASKTNVYISSSAGARWREALPGPHYYTWGDHGGIIMAIAQGMETNELKYSTNEGETWKTFVFSEKPVFVYGLLTEPGEKSTVFTIFGSNKESVHSWLILQVNATDALGVPCTENDYKLWSPSDERGNECLLGHKTVFKRRTPHATCFNGEDFDRPVVVSNCSCTREDYECDFGFKMSEDLSLEVCVPDPEFSGKPYSPPVPCPVGSSYRRTRGYRKISGDTCSGGDVEARLEGELVPCPLAEENEFILYAMRKSIYRYDLASGATEQLPLSGLRAAVALDFDYERNCLYWSDLALDTIQRLCLNGSTGQEVIINSGLETVEALAFEPLSQLLYWVDAGFKKIEVANPDGDFRLTIVNSSVLDRPRALVLVPQEGVMFWTDWGDLKPGIYRSYMDGSAAYRLVSEDVKWPNGISVDSQWIYWTDAYLDCIERITFSGQQRSVILDSLPHPYAIAVFKNEIYWDDWSQLSIFRASKHSRSQVEILASQLTGLMDMKVFYKGKNAGSNACVPQPCSLLCLPKANNSKSCRCPEGVASSVLPSGDLMCDCPQGYQRKNNTCVKEENTCLRNQYRCSNGNCINSIWWCDFDNDCGDMSDERNCPTTVCDADTQFRCQESGTCIPLSYKCDLEDDCGDNSDESHCEMHQCRSDEFNCSSGMCIRSSWVCDGDNDCRDWSDEANCTAIYHTCEASNFQCHNGHCIPQRWACDGDADCQDGSDEDPVSCEKKCNGFHCPNGTCIPSSKHCDGLRDCPDGSDEQHCEPFCTRFMDFVCKNRQQCLFHSMVCDGIVQCRDGSDEDAAFAGCSQDPEFHKECDEFGFQCQNGVCISLIWKCDGMDDCGDYSDEANCENPTEAPNCSRYFQFHCENGHCIPNRWKCDRENDCGDWSDEKDCGDSHVLPSPTPGPSTCLPNYFHCSSGACVMGTWVCDGYRDCADGSDEEACPSLANSTAASTPTQFGQCDRFEFECHQPKKCIPNWKRCDGHQDCQDGQDEANCPTHSTLTCTSREFKCEDGEACIVLSERCDGFLDCSDESDEKACSDELTVYKVQNLQWTADFSGDVTLTWMRPKKMPSASCVYNVYYRVVGESIWKTLETHSNKTSTVLKVLKPDTTYQVKVQVHCLNKVHNTNDFVTLRTPEGLPDAPRNLQLSLNSEEEGVILGHWAPPVHTHGLIREYIVEYSRSGSKMWASQRAASNSTEIKNLLLNALYTVRVAAVTSRGIGNWSDSKSITTIKGKVIQAPNIHIDSYDENSLSFTLTMDGDIKVNGYVVNLFWSFDAHKQEKKTLSFRGGSALSHRVSNLTAHTSYEISAWAKTDLGDSPLAFEHILTRGSSPPAPSLKAKAINQTAVECIWTGPKNVVYGIFYATSFLDLYRNPKSVTTSLHNKTVIVSKDEQYLFLVRVLIPYQGPSSDYVVVKMIPDSRLPPRHLHAVHIGKTSALIKWESPYDSPDQDLFYAIAVKDLIRKTDRSYKVRSRNSTVEYSLSKLEPGGKYHIIVQLGNMSKDSSIKITTVSLSAPDALKIITENDHVLLFWKSLALKEKQFNETRGYEIHMSDSAVNLTAYLGNTTDNFFKVSNLKMGHNYTFTVQARCLFGSQICGEPAVLLYDELSSGADAAVIQAARSTDVAAVVVPILFLILLSLGVGFAILYTKHRRLQSSFSAFANSHYSSRLGSAIFSSGDDLGEDDEDAPMITGFSDDVPMVIA.

The N-terminal stretch at 1-28 (MATRSSRRESRLPFLFALVALLPRGALG) is a signal peptide. Residues 29-81 (GGWTQRLHGGPAPLPQDRGFFVVQGDPRDLRLGTHGDAPGASPAARKPLRTRR) constitute a propeptide, removed in mature form. The disordered stretch occupies residues 59 to 84 (RLGTHGDAPGASPAARKPLRTRRSAA). Over 82-2138 (SAALQPQPIQ…IQAARSTDVA (2057 aa)) the chain is Lumenal. A glycan (N-linked (GlcNAc...) asparagine) is linked at asparagine 99. The residue at position 114 (serine 114) is a Phosphoserine. The BNR 1 repeat unit spans residues 136-147 (YVSYDYGKSFSK). Residue asparagine 158 is glycosylated (N-linked (GlcNAc...) asparagine). Residues 232–243 (WKSDDFGQTWIM) form a BNR 2 repeat. N-linked (GlcNAc...) asparagine glycans are attached at residues asparagine 367, asparagine 368, and asparagine 430. BNR repeat units follow at residues 441 to 452 (VITFDKGGTWEF), 521 to 532 (YISSSAGARWRE), and 562 to 573 (KYSTNEGETWKT). N-linked (GlcNAc...) asparagine glycans are attached at residues asparagine 616, asparagine 674, asparagine 818, and asparagine 871. LDL-receptor class B repeat units lie at residues 800–843 (NCLY…EPLS), 844–887 (QLLY…VPQE), 888–932 (GVMF…DSQW), 933–972 (IYWT…FKNE), and 973–1013 (IYWD…FYKG). Positions 1026-1072 (CSLLCLPKANNSKSCRCPEGVASSVLPSGDLMCDCPQGYQRKNNTCV) constitute an EGF-like domain. 2 N-linked (GlcNAc...) asparagine glycosylation sites follow: asparagine 1035 and asparagine 1068. 9 consecutive LDL-receptor class A domains span residues 1076–1114 (NTCL…NCPT), 1115–1155 (TVCD…HCEM), 1156–1194 (HQCR…NCTA), 1198–1236 (TCEA…VSCE), 1238–1272 (KCNG…QHCE), 1273–1317 (PFCT…GCSQ), 1323–1361 (KECD…NCEN), 1366–1405 (PNCS…DCGD), and 1417–1455 (STCL…ACPS). Intrachain disulfides connect cysteine 1078–cysteine 1090, cysteine 1085–cysteine 1103, cysteine 1097–cysteine 1112, cysteine 1117–cysteine 1131, cysteine 1125–cysteine 1144, cysteine 1138–cysteine 1153, cysteine 1158–cysteine 1170, cysteine 1165–cysteine 1183, cysteine 1177–cysteine 1192, cysteine 1199–cysteine 1211, cysteine 1206–cysteine 1224, cysteine 1218–cysteine 1235, cysteine 1239–cysteine 1249, cysteine 1244–cysteine 1262, cysteine 1256–cysteine 1271, cysteine 1275–cysteine 1289, cysteine 1283–cysteine 1302, cysteine 1296–cysteine 1315, cysteine 1325–cysteine 1337, cysteine 1332–cysteine 1350, and cysteine 1344–cysteine 1359. Residue asparagine 1164 is glycosylated (N-linked (GlcNAc...) asparagine). N-linked (GlcNAc...) asparagine glycosylation occurs at asparagine 1191. Asparagine 1246 carries an N-linked (GlcNAc...) asparagine glycan. An N-linked (GlcNAc...) asparagine glycan is attached at asparagine 1367. 6 disulfide bridges follow: cysteine 1368–cysteine 1381, cysteine 1376–cysteine 1394, cysteine 1388–cysteine 1403, cysteine 1419–cysteine 1431, cysteine 1426–cysteine 1444, and cysteine 1438–cysteine 1453. An N-linked (GlcNAc...) asparagine glycan is attached at asparagine 1458. LDL-receptor class A domains lie at 1469 to 1508 (GQCD…NCPT) and 1512 to 1551 (LTCT…ACSD). Cystine bridges form between cysteine 1471–cysteine 1484, cysteine 1478–cysteine 1497, cysteine 1491–cysteine 1506, cysteine 1514–cysteine 1527, cysteine 1521–cysteine 1540, and cysteine 1534–cysteine 1549. Fibronectin type-III domains lie at 1557-1649 (KVQN…TPEG), 1653-1745 (APRN…TIKG), 1747-1846 (VIQA…SPPA), 1844-1928 (PPAP…VVKM), 1935-2030 (PPRH…APDA), and 2031-2119 (LKII…LYDE). N-linked (GlcNAc...) asparagine glycans are attached at residues asparagine 1608, asparagine 1706, asparagine 1733, asparagine 1810, asparagine 1855, asparagine 1895, asparagine 1987, asparagine 2011, asparagine 2055, asparagine 2070, asparagine 2077, and asparagine 2093. A helical membrane pass occupies residues 2139–2159 (AVVVPILFLILLSLGVGFAIL). Topologically, residues 2160–2215 (YTKHRRLQSSFSAFANSHYSSRLGSAIFSSGDDLGEDDEDAPMITGFSDDVPMVIA) are cytoplasmic. Positions 2162 to 2165 (KHRR) match the Potential nuclear localization signal for the C-terminal fragment generated by PSEN1 motif. The Endocytosis signal motif lies at 2173–2178 (FANSHY). The segment at 2191-2215 (DDLGEDDEDAPMITGFSDDVPMVIA) is required for efficient Golgi apparatus - endosome sorting. Residues 2202 to 2215 (MITGFSDDVPMVIA) are required for interaction with GGA1 and GGA2. Phosphoserine; by ROCK2 is present on serine 2207. The short motif at 2209 to 2213 (DVPMV) is the DXXLL motif involved in the interaction with GGA1 element.

The protein belongs to the VPS10-related sortilin family. SORL1 subfamily. In terms of assembly, after maturation cleavage, interacts (via N-terminus) with its own propeptide; this interaction prevents interaction with other ligands, including CRLF1, GDNF, GFRA1, IL6 and IL6R. Interacts (via N-terminal ectodomain) with APP, forming a 1:1 stoichiometric complex, including with isoforms APP695, APP751 and APP770; this interaction retains APP in the trans-Golgi network and reduces processing into soluble APP-alpha and amyloid-beta peptides. Also interacts with APP C-terminal fragment C99 and with Abeta40. Interacts with beta-secretase BACE1/BACE; this interaction may affect BACE1-binding to APP and hence reduce BACE1-dependent APP cleavage. Interacts with LRPAP1/RAP. Interacts (via C-terminal cytosolic domain) with GGA1 and GGA2 (via N-terminal VHS domain). Interacts with PACS1. May interact (via the N-terminal ectodomain) with the morphogenetic neuropeptide, also called head activator or HA; this interaction is impaired in the presence of propeptide. Interacts with neurotensin/NTS. Interacts (via the N-terminal ectodomain) with PDGFB homodimer. Interacts (via N-terminal ectodomain) with the uPA receptor PLAUR. Interacts with uPA/PLAU and PAI1/SERPINE1, either individually or in complex with each other, leading to endocytosis. Also interacts with PAI1/SERPINE1 in complex with tPA/PLAT. Interacts (via C-terminus) with AP-1 and AP-2 complexes. Interacts with BMPR1A and BMPR1B. Interacts with lipoprotein lipase LPL; this interaction is optimal in slightly acidic conditions. Interacts (via N-terminal ectodomain) with GDNF (via propeptide) and GDNF receptor alpha-1/GFRA1, either individually or in complex with each other. The interaction with GDNF occurs mostly intracellularly. Also interacts with other GDNF receptor alpha family members, including GFRA2, GFRA3 and GFRA4. Interacts with the insulin receptor INSR; this interaction strongly increases the surface exposure of INSR. Interacts (via cytosolic C-terminus) with STK39/SPAK. Interacts (via N-terminal ectodomain) with the heterodimeric complex CRLF1-CLC; within this complex, the interaction is mediated predominantly by the CRLF1 moiety. Interacts with CNTFR, as well as with the tripartite signaling complex formed by CRLF1, CLC and CNTFR. Interacts (via N-terminal ectodomain) with IL6; this interaction leads to IL6 internalization and lysosomal degradation. Binding of SOLRL1 secreted N-terminal ectodomain to IL6 may increase IL6 trans signaling. Interacts with secreted IL6R; this interaction leads to IL6R internalization. Also interacts with transmembrane IL6R; this interaction does not affect subcellular location. Interacts with APOE. Interacts with apolipoprotein E-rich beta-VLDL. Interacts with APOA5; this interaction leads to APOA5 internalization and is abolished by heparin. Interaction with APOA5 results in enhanced binding to chylomicrons. Interacts with ROCK2. Interacts (via cytosolic C-terminus) with PPP3CB/calcineurin A beta. Interacts with NTRK2/TRKB; this interaction facilitates NTRK2 trafficking between synaptic plasma membranes, postsynaptic densities and cell soma, hence positively regulates BDNF signaling. Interacts (via cytosolic C-terminus) with HSPA12A in an ADP-dependent manner; this interaction affects SORL1 internalization and subcellular localization. Interacts (via N-terminal ectodomain) with ERBB2/HER2. Post-translationally, within the Golgi apparatus, the propeptide may be cleaved off by FURIN or a furin-like protease. After cleavage, the propeptide interacts with the mature protein N-terminus, preventing the association with other ligands. At the cell surface, partially subjected to proteolytic shedding that releases the ectodomain in the extracellular milieu. The shedding may be catalyzed by ADAM17/TACE. Following shedding, PSEN1/presenilin-1 cleaves the remaining transmembrane fragment and catalyzes the release of a C-terminal fragment in the cytosol and of a soluble N-terminal beta fragment in the extracellular milieu. The C-terminal cytosolic fragment localizes to the nucleus. Phosphorylation at Ser-2207 facilitates the interaction with GGA1. Highly expressed in the central nervous system, including in the brain and spinal cord, in neurons, as well as in glial cells (at protein level). In the brain, mainly expressed in the cerebellum, hippocampus, dentate gyrus, hypothalamus, and in the cerebral cortex (at protein level). Also detected in kidney, heart, lung and spleen. In the kidney, expressed in epithelial cells in the thick ascending limb of Henle's loop, the distal convoluted tubule, the connecting tubule and the cortical collecting duct (at protein level). Expressed in skeletal muscle (at protein level). Expressed in adipose tissue, including in brown adipose tissue and subcutaneous white adipose tissue. Expressed in intimal smooth muscle cells (at protein level).

It is found in the golgi apparatus membrane. Its subcellular location is the golgi apparatus. The protein localises to the trans-Golgi network membrane. The protein resides in the endosome membrane. It localises to the early endosome membrane. It is found in the recycling endosome membrane. Its subcellular location is the endoplasmic reticulum membrane. The protein localises to the endosome. The protein resides in the multivesicular body membrane. It localises to the cell membrane. It is found in the cytoplasmic vesicle. Its subcellular location is the secretory vesicle membrane. The protein localises to the secreted. In terms of biological role, sorting receptor that directs several proteins to their correct location within the cell. Along with AP-1 complex, involved Golgi apparatus - endosome sorting. Sorting receptor for APP, regulating its intracellular trafficking and processing into amyloidogenic-beta peptides. Retains APP in the trans-Golgi network, hence preventing its transit through late endosomes where amyloid beta peptides Abeta40 and Abeta42 are generated. May also sort newly produced amyloid-beta peptides to lysosomes for catabolism. Does not affect APP trafficking from the endoplasmic reticulum to Golgi compartments. Sorting receptor for the BDNF receptor NTRK2/TRKB that facilitates NTRK2 trafficking between synaptic plasma membranes, postsynaptic densities and cell soma, hence positively regulates BDNF signaling by controlling the intracellular location of its receptor. Sorting receptor for GDNF that promotes GDNF regulated, but not constitutive secretion. Sorting receptor for the GDNF-GFRA1 complex, directing it from the cell surface to endosomes. GDNF is then targeted to lysosomes and degraded, while its receptor GFRA1 recycles back to the cell membrane, resulting in a GDNF clearance pathway. The SORL1-GFRA1 complex further targets RET for endocytosis, but not for degradation, affecting GDNF-induced neurotrophic activities. Sorting receptor for ERBB2/HER2. Regulates ERBB2 subcellular distribution by promoting its recycling after internalization from endosomes back to the plasma membrane, hence stimulating phosphoinositide 3-kinase (PI3K)-dependent ERBB2 signaling. Sorting receptor for lipoprotein lipase LPL. Promotes LPL localization to endosomes and later to the lysosomes, leading to degradation of newly synthesized LPL. Potential sorting receptor for APOA5, inducing APOA5 internalization to early endosomes, then to late endosomes, wherefrom a portion is sent to lysosomes and degradation, another portion is sorted to the trans-Golgi network. Sorting receptor for the insulin receptor INSR. Promotes recycling of internalized INSR via the Golgi apparatus back to the cell surface, thereby preventing lysosomal INSR catabolism, increasing INSR cell surface expression and strengthening insulin signal reception in adipose tissue. Does not affect INSR internalization. Plays a role in renal ion homeostasis, controlling the phospho-regulation of SLC12A1/NKCC2 by STK39/SPAK kinase and PPP3CB/calcineurin A beta phosphatase, possibly through intracellular sorting of STK39 and PPP3CB. Stimulates, via the N-terminal ectodomain, the proliferation and migration of smooth muscle cells, possibly by increasing cell surface expression of the urokinase receptor uPAR/PLAUR. This may promote extracellular matrix proteolysis and hence facilitate cell migration. By acting on the migration of intimal smooth muscle cells, may accelerate intimal thickening following vascular injury. Promotes adhesion of monocytes. Stimulates proliferation and migration of monocytes/macrophages. Through its action on intimal smooth muscle cells and macrophages, may accelerate intimal thickening and macrophage foam cell formation in the process of atherosclerosis. Regulates hypoxia-enhanced adhesion of hematopoietic stem and progenitor cells to the bone marrow stromal cells via a PLAUR-mediated pathway. This function is mediated by the N-terminal ectodomain. Metabolic regulator, which functions to maintain the adequate balance between lipid storage and oxidation in response to changing environmental conditions, such as temperature and diet. The N-terminal ectodomain negatively regulates adipose tissue energy expenditure, acting through the inhibition the BMP/Smad pathway. May regulate signaling by the heterodimeric neurotrophic cytokine CLCF1-CRLF1 bound to the CNTFR receptor by promoting the endocytosis of the tripartite complex CLCF1-CRLF1-CNTFR and lysosomal degradation. May regulate IL6 signaling, decreasing cis signaling, possibly by interfering with IL6-binding to membrane-bound IL6R, while up-regulating trans signaling via soluble IL6R. The protein is Sortilin-related receptor (Sorl1) of Mus musculus (Mouse).